The primary structure comprises 573 residues: ESX-1 secretion system protein EccA1 (573 aa).

Position 334-341 (334-341) interacts with ATP; sequence GPPGTGKT.

Belongs to the CbxX/CfxQ family. Part of the ESX-1 / type VII secretion system (T7SS), which is composed of cytosolic and membrane components.

It is found in the cytoplasm. Part of the ESX-1 specialized secretion system, which delivers several virulence factors to host cells during infection, including the key virulence factors EsxA (ESAT-6) and EsxB (CFP-10). EccA1 exhibits ATPase activity and may provide energy for the export of ESX-1 substrates. The protein is ESX-1 secretion system protein EccA1 of Mycobacterium tuberculosis (strain CDC 1551 / Oshkosh).